A 177-amino-acid polypeptide reads, in one-letter code: Ribonuclease alpha-sarcin (177 aa).

Positions 1–27 (MVAIKNLVLVALTAVTALAVPSPLEAR) are cleaved as a signal peptide. 2 cysteine pairs are disulfide-bonded: Cys33–Cys175 and Cys103–Cys159. His77 is a catalytic residue. The disordered stretch occupies residues 86–119 (DGKLPKGRTPIKFGKSDCDRPPKHSKDGNGKTDH). Residues 99 to 119 (GKSDCDRPPKHSKDGNGKTDH) show a composition bias toward basic and acidic residues. The active-site Proton acceptor is the Glu123. His164 acts as the Proton donor in catalysis.

It belongs to the ribonuclease U2 family.

The protein resides in the secreted. It carries out the reaction a 28S rRNA containing guanosine-adenosine pair + H2O = an [RNA fragment]-3'-adenosine-3'-phosphate + a 5'-a hydroxy-guanosine-3'-[RNA fragment].. Functionally, alpha-sarcin is specific for purines in both single- and double-stranded RNA. Its toxic action on eukaryotic cells is the result of cleavage of a single phosphodiester bond in the 60S subunit of ribosomes. Inhibits both the EFl (elongation factor 1)-dependent binding of aminoacyl-tRNA and the GTP-dependent binding of EF2 (elongation factor 2) to ribosomes. In Aspergillus giganteus, this protein is Ribonuclease alpha-sarcin (sar).